The sequence spans 206 residues: Probable glutathione S-transferase 7 (206 aa).

One can recognise a GST N-terminal domain in the interval 2–79 (VHYKVSYFPI…YLARQFGING (78 aa)). Residues Y8, W39, K43, 49–51 (GQL), and 63–64 (QS) each bind glutathione. One can recognise a GST C-terminal domain in the interval 81-206 (CAWEEAQVNS…WLETRPVTPF (126 aa)).

This sequence belongs to the GST superfamily. Sigma family.

The catalysed reaction is RX + glutathione = an S-substituted glutathione + a halide anion + H(+). In terms of biological role, conjugation of reduced glutathione to a wide number of exogenous and endogenous hydrophobic electrophiles. May play a role in the detoxification of reactive oxygen species produced during pathogenic bacterial infection. The sequence is that of Probable glutathione S-transferase 7 (gst-7) from Caenorhabditis elegans.